An 877-amino-acid polypeptide reads, in one-letter code: Dystroglycan 1 (877 aa).

An N-terminal signal peptide occupies residues 1-29; the sequence is MRMSAGLSLLIPLWGRTFLLLLSVAVTQS. The required for laminin recognition stretch occupies residues 30 to 408; it reads RWPSEPSDAV…GHIRPTMTIP (379 aa). An O-glycosylated at one site region spans residues 49 to 71; it reads SMHSVLSDLHEAVPTVVGIPDGT. A glycan (N-linked (GlcNAc...) asparagine) is linked at Asn-141. Cys-182 and Cys-264 are joined by a disulfide. The segment at 316-468 is mucin-like domain; the sequence is ATPTPVTAIG…PPTRIRTTTS (153 aa). O-linked (Man6P...) threonine glycans are attached at residues Thr-317, Thr-319, and Thr-379. Disordered regions lie at residues 380-444 and 458-480; these read PTLG…PVPR and SPPT…QRPE. The segment covering 413–433 has biased composition (low complexity); the sequence is PTAVATPPTPTTKNPRVSXPT. The segment at 446–468 is O-glycosylated at seven sites with GalNAc; sequence TTKAPITRLETASPPTRIRTTTS. In terms of domain architecture, Peptidase S72 spans 585–694; it reads RAPARFTAKF…MSIAVTGSGS (110 aa). N-linked (GlcNAc...) asparagine glycosylation is found at Asn-623, Asn-631, and Asn-643. Cys-651 and Cys-695 are joined by a disulfide. A compositionally biased stretch (pro residues) spans 706 to 717; sequence PKRVPSEAPPTE. Positions 706–727 are disordered; that stretch reads PKRVPSEAPPTEVPDRDPEKSS. Positions 718–727 are enriched in basic and acidic residues; the sequence is VPDRDPEKSS. Residues 732 to 757 form a helical membrane-spanning segment; the sequence is YLHTVIPAVVVAAILLIAGIIAMICY. Residues 758-764 carry the Nuclear localization signal motif; that stretch reads RKKRKGK. Thr-772 carries the phosphothreonine modification. The tract at residues 801 to 877 is required for interaction with CAV3; sequence LQEEKAPLPP…YRSPPPYVPP (77 aa). The tract at residues 805 to 877 is disordered; that stretch reads KAPLPPPEYP…YRSPPPYVPP (73 aa). Over residues 814 to 828 the composition is skewed to polar residues; sequence PNQSVPETTPLNQDT. Pro residues predominate over residues 841-852; it reads NAPPYQPPPPFT. Residues 862 to 877 are required for binding DMD and UTRN; sequence PKNMTPYRSPPPYVPP. The PPXY motif motif lies at 871-874; sequence PPPY. Phosphotyrosine; by SRC is present on Tyr-874.

In terms of assembly, monomer. Heterodimer of alpha- and beta-dystroglycan subunits which are the central components of the dystrophin-glycoprotein complex. This complex then can form a dystrophin-associated glycoprotein complex (DGC) which is composed of three subcomplexes: a cytoplasmic complex comprised of DMD (or UTRN), DTNA and a number of syntrophins, such as SNTB1, SNTB2, SNTG1 and SNTG2, the transmembrane dystroglycan complex, and the sarcoglycan-sarcospan complex. Interacts (via the N-terminal of alphaDAG1) with LARGE1; the interaction enhances laminin binding. Interacts with SGCD. Interacts with AGR2 and AGR3. Interacts (betaDAG1) with DMD; the interaction is inhibited by phosphorylation on the PPXY motif. Interacts (betaDAG1, via its PPXY motif) with UTRN (via its WWW and ZZ domains); the interaction is inhibited by phosphorylation on the PPXY motif. Interacts (betaDAG1, via its phosphorylated PPXY motif) with the SH2 domain-containing proteins, FYN, CSK, NCK and SHC. Interacts (betaDAG1) with CAV3 (via a central WW-like domain); the interaction disrupts the binding of DMD. BetaDAG1 directly interacts with ANK3, but not with ANK2; this interaction does not interfere with DMD-binding and is required for retention at costameres. Identified in a dystroglycan complex that contains at least PRX, DRP2, UTRN, DMD and DAG1. Interacts with POMGNT1. BetaDAG1 interacts with CD93. O-glycosylated. POMGNT1 catalyzes the initial addition of N-acetylglucosamine, giving rise to the GlcNAc(beta1-2)Man(alpha1-)O-Ser/Thr moiety and thus providing the necessary basis for the addition of further carbohydrate moieties. Heavily O-glycosylated comprising of up to two thirds of its mass and the carbohydrate composition differs depending on tissue type. Mucin-type O-glycosylation is important for ligand binding activity. O-mannosylation of alpha-DAG1 is found in high abundance in both brain and muscle where the most abundant glycan is Sia-alpha-2-3-Gal-beta-1-4-Glc-NAc-beta-1-2-Man. In muscle, glycosylation on Thr-317, Thr-319 and Thr-379 by a phosphorylated O-mannosyl glycan with the structure 2-(N-acetylamido)-2-deoxygalactosyl-beta-1,3-2-(N-acetylamido)-2-deoxyglucosyl-beta-1,4-6-phosphomannose is mediated by like-acetylglucosaminyltransferase (LARGE1) protein amd is required for laminin binding. O-glycosylated in the N-terminal region with a core 1 or possibly core 8 glycan. The brain form displays a unique glycosylation pattern which is absent in other tissues; this form shows enhanced binding to laminin LAMA5 compared to the skeletal muscle form. In terms of processing, N-glycosylated. Post-translationally, autolytic cleavage produces the alpha and beta subunits. In cutaneous cells, as well as in certain pathological conditions, shedding of beta-dystroglycan can occur releasing a peptide of about 30 kDa. SRC-mediated phosphorylation of the PPXY motif of the beta subunit recruits SH2 domain-containing proteins, but inhibits binding to WWW domain-containing proteins, DMD and UTRN. This phosphorylation also inhibits nuclear entry.

The protein resides in the secreted. Its subcellular location is the extracellular space. It localises to the cell membrane. It is found in the cytoplasm. The protein localises to the cytoskeleton. The protein resides in the nucleus. Its subcellular location is the nucleoplasm. It localises to the sarcolemma. It is found in the postsynaptic cell membrane. In terms of biological role, the dystroglycan complex is involved in a number of processes including laminin and basement membrane assembly, sarcolemmal stability, cell survival, peripheral nerve myelination, nodal structure, cell migration, and epithelial polarization. Its function is as follows. Extracellular peripheral glycoprotein that acts as a receptor for extracellular matrix proteins containing laminin-G domains. Receptor for laminin-2 (LAMA2) and agrin in peripheral nerve Schwann cells. Also acts as a receptor for laminin LAMA5. Functionally, transmembrane protein that plays important roles in connecting the extracellular matrix to the cytoskeleton. Acts as a cell adhesion receptor in both muscle and non-muscle tissues. Receptor for both DMD and UTRN and, through these interactions, scaffolds axin to the cytoskeleton. Also functions in cell adhesion-mediated signaling and implicated in cell polarity. This chain is Dystroglycan 1, found in Sus scrofa (Pig).